We begin with the raw amino-acid sequence, 125 residues long: Protein ApaG (125 aa).

Residues 1–125 (MINSPRVCIQ…FRLAVPTLIH (125 aa)) enclose the ApaG domain.

In Salmonella arizonae (strain ATCC BAA-731 / CDC346-86 / RSK2980), this protein is Protein ApaG.